Reading from the N-terminus, the 485-residue chain is MTGGGDPVVRRDRFSGGPARSFLSSMDGDGRIFEADLAVDRAHVVMLAEQDVIGDEAAAAILGALADVEAAGFDALPPGEDVHEAIETAVVEAVGRDGGKLHTARSRNDEVAACIRYRLRADLLDAIEVVVALRSALADVAAAEAETVMPGFTHLQPAQPTTVAHWALSYAGTLARDTGRLCDAYGRTNESPLGAAAFAGTTFGVDRERTAALLGFDGVVANAADAAASRDFLLEAVSALASVAVTCSGLAADVVFFANRGFVEVSDDYASTSSIMPQKKNPDTMELVRATAGDAVGAQQALATTLQGLPRAYNRDLQRATGHAWTAVDGVTSAVEVAAGVVATAGWPADDLEAAAGEGFSTATGVADALAAGGLPFRTAHEVVALAAERGCEGATLDAVAAATEAVTGEPLSAVVEPAAVADALDPVGSVAARDSAGGPAPAAVEAAVADVRDGIDADEAALAAERASLADAADALAAEVSGYV.

The protein belongs to the lyase 1 family. Argininosuccinate lyase subfamily.

The protein resides in the cytoplasm. The enzyme catalyses 2-(N(omega)-L-arginino)succinate = fumarate + L-arginine. The protein operates within amino-acid biosynthesis; L-arginine biosynthesis; L-arginine from L-ornithine and carbamoyl phosphate: step 3/3. This Halobacterium salinarum (strain ATCC 29341 / DSM 671 / R1) protein is Argininosuccinate lyase.